Consider the following 1214-residue polypeptide: Inner capsid protein VP3 (1214 aa).

A disordered region spans residues 1–80 (MPRRSARKAQ…SVNNDGDIIT (80 aa)). Over residues 8–18 (KAQSATASPAD) the composition is skewed to polar residues. Over residues 28–51 (PTTNSPPSTTSPNQAAADANQQQA) the composition is skewed to low complexity. The segment at 117-140 (YVCNVCNARFSTMSALSEHLRSDH) adopts a C2H2-type zinc-finger fold.

The protein belongs to the turreted BTV-fold inner capsid family. Homodecamer; each decamer is made up of two conformers of VP2, called VP2A and VP2B. 12 homodecamers assemble to form an icosahedral capsid. Interacts with VP6.

The protein resides in the virion. Functionally, inner capsid protein that self-assembles to form an icosahedral capsid with a T=2 symmetry, which consists of 120 copies of VP2, with channels at each of its five-fold vertices. This capsid constitutes the innermost concentric layer of the viral mature particle. This is Inner capsid protein VP3 (S3) from Notemigonus crysoleucas (Golden shiner).